A 450-amino-acid polypeptide reads, in one-letter code: Signal recognition particle protein (450 aa).

GTP-binding positions include 107-114 (GLQGSGKT), 190-194 (DTAGR), and 248-251 (TKTD).

This sequence belongs to the GTP-binding SRP family. SRP54 subfamily. As to quaternary structure, part of the signal recognition particle protein translocation system, which is composed of SRP and FtsY. SRP is a ribonucleoprotein composed of Ffh and a 4.5S RNA molecule.

The protein resides in the cytoplasm. The catalysed reaction is GTP + H2O = GDP + phosphate + H(+). In terms of biological role, involved in targeting and insertion of nascent membrane proteins into the cytoplasmic membrane. Binds to the hydrophobic signal sequence of the ribosome-nascent chain (RNC) as it emerges from the ribosomes. The SRP-RNC complex is then targeted to the cytoplasmic membrane where it interacts with the SRP receptor FtsY. Interaction with FtsY leads to the transfer of the RNC complex to the Sec translocase for insertion into the membrane, the hydrolysis of GTP by both Ffh and FtsY, and the dissociation of the SRP-FtsY complex into the individual components. The polypeptide is Signal recognition particle protein (Buchnera aphidicola subsp. Baizongia pistaciae (strain Bp)).